The chain runs to 379 residues: MEQLSSANSLFALELFHTLSESSPTGNIFFSPFSISSALAMVFLGTKGTTAAQLSKTFHFDSVEDVHSRFQSLNAEVSKRGASHTLKLANRLYGEKTYNFLPEFLTSTQKMYGADLAPVDFQHASEDARKEINQWVKGQTEGKIPELLAVGVVDSMTKLVLVNAIYFKGMWEEKFMKQDTTDAPFRLNKKNTKSVKMMYQKKKFFFGYISDLKCKVLEMPYQGGELSMVILLPEDIEDESTGLKKIEEQITLEKLREWTKRENLENIDVHVKLPRFKIEESYILNSNLGRLGLQDLFNSSKADLSGMSGSRDLFISKIVHKAFVEVNEEGTEAAAATAGIATFCMLLPEEEFTADHPFIFFIRHNPTANVLFLGRVCSP.

Position 300 is a phosphoserine (Ser300).

The protein belongs to the serpin family. Ov-serpin subfamily. Monomer.

It localises to the secreted. Its subcellular location is the cytoplasm. The protein resides in the cytolytic granule. It is found in the early endosome. Functionally, regulates the activity of the neutrophil proteases. This Rattus norvegicus (Rat) protein is Leukocyte elastase inhibitor A (Serpinb1a).